The following is a 380-amino-acid chain: Cytochrome b (380 aa).

4 helical membrane passes run 34–54 (FGSL…FLAM), 78–99 (WLLR…YFHI), 114–134 (WNIG…GYVL), and 179–199 (FFTF…INLL). 2 residues coordinate heme b: histidine 84 and histidine 98. Heme b is bound at residue histidine 183. A ubiquinone is bound at residue histidine 202. The next 4 helical transmembrane spans lie at 227–247 (YKDL…STFA), 289–309 (LGGV…PIIH), 321–341 (IAKT…WIGG), and 348–368 (FITI…LLIP).

The protein belongs to the cytochrome b family. As to quaternary structure, the cytochrome bc1 complex contains 3 respiratory subunits (MT-CYB, CYC1 and UQCRFS1), 2 core proteins (UQCRC1 and UQCRC2) and probably 6 low-molecular weight proteins. It depends on heme b as a cofactor.

The protein localises to the mitochondrion inner membrane. Its function is as follows. Component of the ubiquinol-cytochrome c reductase complex (complex III or cytochrome b-c1 complex) that is part of the mitochondrial respiratory chain. The b-c1 complex mediates electron transfer from ubiquinol to cytochrome c. Contributes to the generation of a proton gradient across the mitochondrial membrane that is then used for ATP synthesis. The sequence is that of Cytochrome b (mt-cyb) from Pelophylax plancyi (Korean pond frog).